A 296-amino-acid chain; its full sequence is CRISPR-associated endonuclease Cas1 2 (296 aa).

Mn(2+) is bound by residues glutamate 157, histidine 224, and aspartate 237.

This sequence belongs to the CRISPR-associated endonuclease Cas1 family. As to quaternary structure, homodimer, forms a heterotetramer with a Cas2 homodimer. Mg(2+) is required as a cofactor. Mn(2+) serves as cofactor.

CRISPR (clustered regularly interspaced short palindromic repeat), is an adaptive immune system that provides protection against mobile genetic elements (viruses, transposable elements and conjugative plasmids). CRISPR clusters contain spacers, sequences complementary to antecedent mobile elements, and target invading nucleic acids. CRISPR clusters are transcribed and processed into CRISPR RNA (crRNA). Acts as a dsDNA endonuclease. Involved in the integration of spacer DNA into the CRISPR cassette. This is CRISPR-associated endonuclease Cas1 2 from Chlorobaculum tepidum (strain ATCC 49652 / DSM 12025 / NBRC 103806 / TLS) (Chlorobium tepidum).